A 278-amino-acid chain; its full sequence is Large ribosomal subunit protein uL2 (278 aa).

A disordered region spans residues 225–278 (MNPVDHPHGGGEGRTSGGRHPVTPWGKPTKGKKTRANKATDKYIVRSRHQKKKG). Basic residues predominate over residues 269 to 278 (VRSRHQKKKG).

Belongs to the universal ribosomal protein uL2 family. In terms of assembly, part of the 50S ribosomal subunit. Forms a bridge to the 30S subunit in the 70S ribosome.

Its function is as follows. One of the primary rRNA binding proteins. Required for association of the 30S and 50S subunits to form the 70S ribosome, for tRNA binding and peptide bond formation. It has been suggested to have peptidyltransferase activity; this is somewhat controversial. Makes several contacts with the 16S rRNA in the 70S ribosome. This Parvibaculum lavamentivorans (strain DS-1 / DSM 13023 / NCIMB 13966) protein is Large ribosomal subunit protein uL2.